The primary structure comprises 290 residues: 4-diphosphocytidyl-2-C-methyl-D-erythritol kinase (290 aa).

Lysine 10 is a catalytic residue. 96–106 (PIAAGLGGGSS) is an ATP binding site. The active site involves aspartate 138.

Belongs to the GHMP kinase family. IspE subfamily.

The enzyme catalyses 4-CDP-2-C-methyl-D-erythritol + ATP = 4-CDP-2-C-methyl-D-erythritol 2-phosphate + ADP + H(+). The protein operates within isoprenoid biosynthesis; isopentenyl diphosphate biosynthesis via DXP pathway; isopentenyl diphosphate from 1-deoxy-D-xylulose 5-phosphate: step 3/6. Its function is as follows. Catalyzes the phosphorylation of the position 2 hydroxy group of 4-diphosphocytidyl-2C-methyl-D-erythritol. This Caulobacter vibrioides (strain NA1000 / CB15N) (Caulobacter crescentus) protein is 4-diphosphocytidyl-2-C-methyl-D-erythritol kinase.